The primary structure comprises 89 residues: Large ribosomal subunit protein eL34 (89 aa).

The protein belongs to the eukaryotic ribosomal protein eL34 family.

This Methanococcus maripaludis (strain C6 / ATCC BAA-1332) protein is Large ribosomal subunit protein eL34.